Consider the following 368-residue polypeptide: Mitochondrial intermembrane space import and assembly protein 40 (368 aa).

The N-terminal 29 residues, 1 to 29 (MYRNTMRSASRPVIASLRSSTIRAAPRRF), are a transit peptide targeting the mitochondrion. Residues 30 to 47 (ASTAPADKPRSFKGSLVR) lie on the Mitochondrial matrix side of the membrane. A helical; Signal-anchor for type II membrane protein transmembrane segment spans residues 48–65 (LGLAFGAVYYYNTSPIFA). Residues 66–368 (DEAISKTVPA…AAKKNAEKKQ (303 aa)) are Mitochondrial intermembrane-facing. Over residues 95 to 104 (RKQIKAKSEE) the composition is skewed to basic and acidic residues. The interval 95 to 144 (RKQIKAKSEETAASSKTPESQQSNPQTAAADGSPAALEEEAGQQGAFNPE) is disordered. A compositionally biased stretch (polar residues) spans 105 to 121 (TAASSKTPESQQSNPQT). Cystine bridges form between cysteine 152–cysteine 154, cysteine 163–cysteine 196, and cysteine 173–cysteine 186. Residues 160 to 204 (DGPCGEEFKTAFSCFVFSQEEPKGMDCIDKFQGMQECFKKYPDIY) enclose the CHCH domain. 2 consecutive short sequence motifs (cx9C motif) follow at residues 163 to 173 (CGEEFKTAFSC) and 186 to 196 (CIDKFQGMQEC). The disordered stretch occupies residues 208 to 310 (LADDEDGAPT…GSRMVQDVAI (103 aa)). Residues 240–263 (LARETKDKTAADATKFDDSQKPAE) are compositionally biased toward basic and acidic residues. The segment covering 264–280 (SKTPAKTTSTSTDSAQK) has biased composition (low complexity). The span at 283–295 (VDAHRDAEPKSDA) shows a compositional bias: basic and acidic residues.

In terms of assembly, monomer. Requires Cu(2+) as cofactor. Zn(2+) serves as cofactor.

Its subcellular location is the mitochondrion inner membrane. In terms of biological role, required for the import and folding of small cysteine-containing proteins (small Tim) in the mitochondrial intermembrane space (IMS). Forms a redox cycle with ERV1 that involves a disulfide relay system. Precursor proteins to be imported into the IMS are translocated in their reduced form into the mitochondria. The oxidized form of MIA40 forms a transient intermolecular disulfide bridge with the reduced precursor protein, resulting in oxidation of the precursor protein that now contains an intramolecular disulfide bond and is able to undergo folding in the IMS. The protein is Mitochondrial intermembrane space import and assembly protein 40 (MIA40) of Gibberella zeae (strain ATCC MYA-4620 / CBS 123657 / FGSC 9075 / NRRL 31084 / PH-1) (Wheat head blight fungus).